A 261-amino-acid chain; its full sequence is Shikimate dehydrogenase (NADP(+)) (261 aa).

Residues 13-15 and Thr-60 contribute to the shikimate site; that span reads SLS. Lys-64 functions as the Proton acceptor in the catalytic mechanism. Shikimate contacts are provided by Asn-85 and Asp-100. NADP(+)-binding positions include 121–125 and Ile-202; that span reads GAGGA. Residue Tyr-204 participates in shikimate binding. Gly-225 provides a ligand contact to NADP(+).

The protein belongs to the shikimate dehydrogenase family. Homodimer.

The catalysed reaction is shikimate + NADP(+) = 3-dehydroshikimate + NADPH + H(+). It participates in metabolic intermediate biosynthesis; chorismate biosynthesis; chorismate from D-erythrose 4-phosphate and phosphoenolpyruvate: step 4/7. Functionally, involved in the biosynthesis of the chorismate, which leads to the biosynthesis of aromatic amino acids. Catalyzes the reversible NADPH linked reduction of 3-dehydroshikimate (DHSA) to yield shikimate (SA). The chain is Shikimate dehydrogenase (NADP(+)) from Exiguobacterium sibiricum (strain DSM 17290 / CCUG 55495 / CIP 109462 / JCM 13490 / 255-15).